The primary structure comprises 477 residues: Ribulose bisphosphate carboxylase large chain (477 aa).

A propeptide spanning residues 1-2 is cleaved from the precursor; the sequence is MS. The residue at position 3 (P3) is an N-acetylproline. N6,N6,N6-trimethyllysine is present on K14. Substrate contacts are provided by N123 and T173. K175 serves as the catalytic Proton acceptor. K177 contacts substrate. Residues K201, D203, and E204 each contribute to the Mg(2+) site. K201 is subject to N6-carboxylysine. The active-site Proton acceptor is H294. Residues R295, H327, and S379 each contribute to the substrate site.

It belongs to the RuBisCO large chain family. Type I subfamily. In terms of assembly, heterohexadecamer of 8 large chains and 8 small chains; disulfide-linked. The disulfide link is formed within the large subunit homodimers. It depends on Mg(2+) as a cofactor. The disulfide bond which can form in the large chain dimeric partners within the hexadecamer appears to be associated with oxidative stress and protein turnover.

It is found in the plastid. The enzyme catalyses 2 (2R)-3-phosphoglycerate + 2 H(+) = D-ribulose 1,5-bisphosphate + CO2 + H2O. The catalysed reaction is D-ribulose 1,5-bisphosphate + O2 = 2-phosphoglycolate + (2R)-3-phosphoglycerate + 2 H(+). Its function is as follows. RuBisCO catalyzes two reactions: the carboxylation of D-ribulose 1,5-bisphosphate, the primary event in carbon dioxide fixation, as well as the oxidative fragmentation of the pentose substrate in the photorespiration process. Both reactions occur simultaneously and in competition at the same active site. This chain is Ribulose bisphosphate carboxylase large chain (rbcL), found in Lathraea clandestina (Purple toothwort).